We begin with the raw amino-acid sequence, 185 residues long: NADH-quinone oxidoreductase subunit B (185 aa).

C38, C39, C104, and C133 together coordinate [4Fe-4S] cluster.

Belongs to the complex I 20 kDa subunit family. As to quaternary structure, NDH-1 is composed of 14 different subunits. Subunits NuoB, C, D, E, F, and G constitute the peripheral sector of the complex. [4Fe-4S] cluster serves as cofactor.

Its subcellular location is the cell membrane. It catalyses the reaction a quinone + NADH + 5 H(+)(in) = a quinol + NAD(+) + 4 H(+)(out). In terms of biological role, NDH-1 shuttles electrons from NADH, via FMN and iron-sulfur (Fe-S) centers, to quinones in the respiratory chain. The immediate electron acceptor for the enzyme in this species is believed to be a menaquinone. Couples the redox reaction to proton translocation (for every two electrons transferred, four hydrogen ions are translocated across the cytoplasmic membrane), and thus conserves the redox energy in a proton gradient. The protein is NADH-quinone oxidoreductase subunit B of Cutibacterium acnes (strain DSM 16379 / KPA171202) (Propionibacterium acnes).